The primary structure comprises 94 residues: Integration host factor subunit beta (94 aa).

This sequence belongs to the bacterial histone-like protein family. In terms of assembly, heterodimer of an alpha and a beta chain.

Its function is as follows. This protein is one of the two subunits of integration host factor, a specific DNA-binding protein that functions in genetic recombination as well as in transcriptional and translational control. The sequence is that of Integration host factor subunit beta from Nitrosospira multiformis (strain ATCC 25196 / NCIMB 11849 / C 71).